Reading from the N-terminus, the 1245-residue chain is Pesticidal crystal protein Cry5Ba (1245 aa).

Residues 1219–1245 form a disordered region; sequence PLPTDDQSSDGNTTSNTNSNTSMNNNQ. Low complexity predominate over residues 1222–1245; the sequence is TDDQSSDGNTTSNTNSNTSMNNNQ.

This sequence belongs to the delta endotoxin family.

Its function is as follows. Promotes colloidosmotic lysis by binding to the midgut epithelial cells of hymenopteran species. The sequence is that of Pesticidal crystal protein Cry5Ba (cry5Ba) from Bacillus thuringiensis.